The chain runs to 1479 residues: MKPRLLTTVTTWLALVLPVVYLSRPCQALPTVNFTANYANSTSIASYNLEPEIPYEELEEPRVLPLKAVLPVEASTVDSSGVIDASKSEHHELPLADAAIQPHPDSNSVLKVILEQPESNDEPVTSTHGYPTFSADDNFVPSKPLNLSVLEVTSTTIKITWREPEKLNGAIHGYRVYYVHQNQTLLHLPILKAEAAVNSVYTYTLSNLKPYTDYKIIVAAFTKKFDGEPSEVSQRTDIAGPSAPKVVNLTCHSQDALFFGWRIPQTYYNTIDYYIISYRNVVYADFREIRITANASIVETSMIIPNLTTNSLYEVKVRAASTSVINPKQIILGSYSEPKKINVQLNCEKIPPPSQRQSYNDYNLAVMIGILICCFGLLFIVLTILLWKKCFHAAYYYLDDPPACGNSGGGNSAGIVDWEAPCEVAGEMRSSIPVCEFAKHVAALHVDGDIGFSKEYEAIQGEALNDEYPSEHSQHPDNKAKNRYLNVIAYDHSRVHLRQVPGQKKHLDYINANFIDGYQKPRAFIGTQGPLPCTFDCFWRMIWEQRVAIIVMITNLVERGRRKCDMYWPKDGTEMYGVIAVKLIREEVMATYTVRTFQIKHTKLKKKKASQTEKLVYQYHYTNWPDHGTPDHPLPVINFVKKSTAANPADAGPIVVHCSAGVGRTGTYIVIDAMLKQIEAKNQLNVFGFLRYIRAQRNYLVQTEEQYIFIHDALVEAIDSGETNIKMDAIGGVVNHIEFIDSQYKLITSYQPKEINLTSALKPVNAIKNRSSLVPLEGSRVHLTPKPGVEGSDYINATWLHGYRRLRDFIVTQHPLIDTFKDFWQMVWDHNAQTVVLLSSADNMSFLQFWPNESEPIESDYYRIRLVSETSENDYIVRNFVIQSIQDDYELSVRMFENPMWPDMAQPRSIFDFAVRVHERCAEYRNGPIVIVDRYGGFQACQFCCISSLAMQLEYDQTANVYTYAKLFHNKRPGIWSSYEDIRQIYRILSYMPKELGLLKCTELRTEFDEAAIMTATPDLSPLTRPAHIMSQHYNRFLKLLERWPVDQSKIGRDLGQYLRDQLKAVLGGTNIIAVKDERLVRQHQSLENIVNDVHLKAHPRSLNSTATGLSGEQCREVLSSEFLEYLNKEGGFEKLGLRGGRWMSTEAVRHVPVMAAEAIKFLKPQDSELFIDMTFGAGGHTKQILKAAPNAKIITLDRDPVAHELAQEMAKRYPGQIYPVLGRFSELPAKLKELNVNQRSIDGMIFDFGCSSMQFDEGERGFSISKNGPLDMRMDKDRCPDAPSAADVLARIDEMDLARILKVYGEEKFAKRIARAIVEARHSIKKIETTKELAELVQTCCASEFRLDKLQRPSHPATKTFQALRIFVNNELNEINYGMILAQHYLKIGGKMITITFHSLEDTIVKRHVMGNVANDMANKLPLKYCSHTICHDQTVMDAALKPNWHQMTKHVVVPSDAEVEENPRSRSAKLRAVVRVE.

The first 28 residues, 1–28 (MKPRLLTTVTTWLALVLPVVYLSRPCQA), serve as a signal peptide directing secretion. Topologically, residues 29–365 (LPTVNFTANY…RQSYNDYNLA (337 aa)) are extracellular. Residues Asn33, Asn40, Asn146, Asn182, Asn248, Asn294, and Asn306 are each glycosylated (N-linked (GlcNAc...) asparagine). 2 consecutive Fibronectin type-III domains span residues 143–242 (KPLN…AGPS) and 243–346 (APKV…VQLN). The helical transmembrane segment at 366–386 (VMIGILICCFGLLFIVLTILL) threads the bilayer. The Cytoplasmic portion of the chain corresponds to 387–1479 (WKKCFHAAYY…AKLRAVVRVE (1093 aa)). 2 Tyrosine-protein phosphatase domains span residues 452–717 (FSKE…LVEA) and 740–992 (IDSQ…LSYM). Residue Cys658 is the Phosphocysteine intermediate of the active site.

Belongs to the protein-tyrosine phosphatase family. Receptor class subfamily. As to quaternary structure, interacts with C-type lectin mosGCTL-1. Interacts with C-type lectin mosGCTL-7.

Its subcellular location is the cell membrane. It catalyses the reaction O-phospho-L-tyrosyl-[protein] + H2O = L-tyrosyl-[protein] + phosphate. In terms of biological role, putative protein tyrosine-protein phosphatase. Its function is as follows. (Microbial infection) Facilitates West Nile virus infection in mosquitoes. The protein is Putative receptor-type tyrosine-protein phosphatase mosPTP-1 of Culex quinquefasciatus (Southern house mosquito).